Consider the following 345-residue polypeptide: S-adenosylmethionine:tRNA ribosyltransferase-isomerase (345 aa).

It belongs to the QueA family. Monomer.

Its subcellular location is the cytoplasm. The catalysed reaction is 7-aminomethyl-7-carbaguanosine(34) in tRNA + S-adenosyl-L-methionine = epoxyqueuosine(34) in tRNA + adenine + L-methionine + 2 H(+). It functions in the pathway tRNA modification; tRNA-queuosine biosynthesis. Functionally, transfers and isomerizes the ribose moiety from AdoMet to the 7-aminomethyl group of 7-deazaguanine (preQ1-tRNA) to give epoxyqueuosine (oQ-tRNA). This chain is S-adenosylmethionine:tRNA ribosyltransferase-isomerase, found in Helicobacter pylori (strain J99 / ATCC 700824) (Campylobacter pylori J99).